Consider the following 69-residue polypeptide: UPF0270 protein VCM66_2532 (69 aa).

It belongs to the UPF0270 family.

This chain is UPF0270 protein VCM66_2532, found in Vibrio cholerae serotype O1 (strain M66-2).